Reading from the N-terminus, the 426-residue chain is Enolase (426 aa).

Gln-165 is a (2R)-2-phosphoglycerate binding site. Residue Glu-207 is the Proton donor of the active site. Residues Asp-244, Glu-285, and Asp-312 each coordinate Mg(2+). The (2R)-2-phosphoglycerate site is built by Lys-337, Arg-366, Ser-367, and Lys-388. The Proton acceptor role is filled by Lys-337.

This sequence belongs to the enolase family. Mg(2+) serves as cofactor.

The protein localises to the cytoplasm. It localises to the secreted. Its subcellular location is the cell surface. The enzyme catalyses (2R)-2-phosphoglycerate = phosphoenolpyruvate + H2O. The protein operates within carbohydrate degradation; glycolysis; pyruvate from D-glyceraldehyde 3-phosphate: step 4/5. Its function is as follows. Catalyzes the reversible conversion of 2-phosphoglycerate (2-PG) into phosphoenolpyruvate (PEP). It is essential for the degradation of carbohydrates via glycolysis. The chain is Enolase from Cyanothece sp. (strain PCC 7425 / ATCC 29141).